The chain runs to 505 residues: Pentatricopeptide repeat-containing protein At2g17033 (505 aa).

PPR repeat units lie at residues 243 to 277 (KTQAYKSMVSGLCNMDQPHDAERVIEEMRMEKIKP), 278 to 312 (GLFEYKSVLYGYGRLGLFDDMNRVVHRMGTEGHKI), and 313 to 347 (DTVCSNMVLSSYGAHDALPQMGSWLQKLKGFNVPF). The Smr domain occupies 413–503 (LDLHGMHLSS…AKGKTVKEWL (91 aa)).

Belongs to the PPR family. P subfamily.

The sequence is that of Pentatricopeptide repeat-containing protein At2g17033 from Arabidopsis thaliana (Mouse-ear cress).